Here is a 319-residue protein sequence, read N- to C-terminus: Ribonucleoside-diphosphate reductase 2 subunit beta (319 aa).

D67, E98, and H101 together coordinate Fe cation. Y105 is a catalytic residue. Residues E158, E192, and H195 each coordinate Fe cation.

It belongs to the ribonucleoside diphosphate reductase small chain family. Tetramer of two alpha and two beta subunits. Fe cation serves as cofactor.

It catalyses the reaction a 2'-deoxyribonucleoside 5'-diphosphate + [thioredoxin]-disulfide + H2O = a ribonucleoside 5'-diphosphate + [thioredoxin]-dithiol. Provides the precursors necessary for DNA synthesis. Catalyzes the biosynthesis of deoxyribonucleotides from the corresponding ribonucleotides. R2F contains the tyrosyl radical required for catalysis. The sequence is that of Ribonucleoside-diphosphate reductase 2 subunit beta (nrdF) from Salmonella typhimurium (strain LT2 / SGSC1412 / ATCC 700720).